We begin with the raw amino-acid sequence, 318 residues long: MRLTQAPATTAAAGNPPHKLGFAAKTKAYIALTKPRVMELLLVTTLPTMIFAARGLPNIWLILATMIGGAFAAGSAGAFNCYIDRDIDKIMHRTEDRPLVTGAVTPREALVFSWALGILSIAILWFGANPLAGLLGIAAIFFYVVVYTLILKRRTAQNIVWGGVAGCMPVLIAWAAVTNKVEWPAIILFMVIFLWTPPHYWPLSMRYSEDYKAANVPMLGAVAGARIVSVQVVLYTWAMVVCSLLLIPLGHACIVYTVVAGAAGLWFLLEAHRLHSKASHDTVTNKSAMKVFHGSISYLTLLFVALAVDPFVGMPLMG.

The next 9 helical transmembrane spans lie at 37-57 (VMELLLVTTLPTMIFAARGLP), 59-79 (IWLILATMIGGAFAAGSAGAF), 108-128 (EALVFSWALGILSIAILWFGA), 131-151 (LAGLLGIAAIFFYVVVYTLIL), 158-178 (NIVWGGVAGCMPVLIAWAAVT), 183-203 (WPAIILFMVIFLWTPPHYWPL), 216-238 (VPMLGAVAGARIVSVQVVLYTWA), 249-269 (LGHACIVYTVVAGAAGLWFLL), and 296-316 (ISYLTLLFVALAVDPFVGMPL).

This sequence belongs to the UbiA prenyltransferase family. Protoheme IX farnesyltransferase subfamily.

Its subcellular location is the cell membrane. It carries out the reaction heme b + (2E,6E)-farnesyl diphosphate + H2O = Fe(II)-heme o + diphosphate. It functions in the pathway porphyrin-containing compound metabolism; heme O biosynthesis; heme O from protoheme: step 1/1. Converts heme B (protoheme IX) to heme O by substitution of the vinyl group on carbon 2 of heme B porphyrin ring with a hydroxyethyl farnesyl side group. The chain is Protoheme IX farnesyltransferase from Renibacterium salmoninarum (strain ATCC 33209 / DSM 20767 / JCM 11484 / NBRC 15589 / NCIMB 2235).